Here is a 504-residue protein sequence, read N- to C-terminus: Tyrosine-protein phosphatase non-receptor type substrate 1 (504 aa).

Residues 1–30 form the signal peptide; sequence MEPAGPAPGRLGPLLCLLLAASCAWSGVAG. Residues 31–373 are Extracellular-facing; the sequence is EEELQVIQPD…NTGSNERNIY (343 aa). Residues 32-137 form the Ig-like V-type domain; that stretch reads EELQVIQPDK…SPDDVEFKSG (106 aa). Cystine bridges form between Cys-55–Cys-121 and Cys-170–Cys-228. Ig-like C1-type domains lie at 148-247 and 254-348; these read PSAP…ANLS and PTLE…HDLK. N-linked (GlcNAc...) asparagine glycosylation is found at Asn-245, Asn-270, Asn-292, and Asn-319. Cys-273 and Cys-331 form a disulfide bridge. Positions 336–355 are enriched in basic and acidic residues; the sequence is DGQPAVSKSHDLKVSAHPKE. Positions 336 to 364 are disordered; sequence DGQPAVSKSHDLKVSAHPKEQGSNTAAEN. A helical membrane pass occupies residues 374–394; sequence IVVGVVCTLLVALLMAALYLV. The Cytoplasmic segment spans residues 395-504; sequence RIRQKKAQGS…EYASVQVPRK (110 aa). The disordered stretch occupies residues 402-504; the sequence is QGSTSSTRLH…EYASVQVPRK (103 aa). Over residues 409 to 421 the composition is skewed to basic and acidic residues; the sequence is RLHEPEKNAREIT. Residue Tyr-429 is modified to Phosphotyrosine; by Tyr-kinases. An SH2-binding motif is present at residues 429-432; the sequence is YADL. The short motif at 439 to 444 is the SH3-binding element; the sequence is KPAPQA. Over residues 446–467 the composition is skewed to polar residues; sequence EPNNHTEYASIQTSPQPASEDT. Phosphotyrosine; by Tyr-kinases is present on residues Tyr-453 and Tyr-470. Short sequence motifs (SH2-binding) lie at residues 453–456, 470–473, and 496–499; these read YASI, YADL, and YASV. Residue Tyr-496 is modified to Phosphotyrosine.

Binds PTPN11 when tyrosine-phosphorylated, except in macrophages, where it primarily binds PTPN6. Binds GRB2 in vitro. Binds FGR. Binds JAK2 irrespective of its phosphorylation status and forms a stable complex. Binds SCAP1 and/or SCAP2. The resulting complex recruits FYB1. Binds PTK2B. Interacts with TRIM2. In terms of processing, N-glycosylated. Post-translationally, phosphorylated on tyrosine residues in response to stimulation with EGF, growth hormone, insulin and PDGF. Dephosphorylated by PTPN11. In terms of tissue distribution, ubiquitous. Highly expressed in brain. Detected on myeloid cells, but not T-cells. Detected at lower levels in heart, placenta, lung, testis, ovary, colon, liver, small intestine, prostate, spleen, kidney, skeletal muscle and pancreas.

It is found in the membrane. Functionally, immunoglobulin-like cell surface receptor for CD47. Acts as docking protein and induces translocation of PTPN6, PTPN11 and other binding partners from the cytosol to the plasma membrane. Supports adhesion of cerebellar neurons, neurite outgrowth and glial cell attachment. May play a key role in intracellular signaling during synaptogenesis and in synaptic function. Involved in the negative regulation of receptor tyrosine kinase-coupled cellular responses induced by cell adhesion, growth factors or insulin. Mediates negative regulation of phagocytosis, mast cell activation and dendritic cell activation. CD47 binding prevents maturation of immature dendritic cells and inhibits cytokine production by mature dendritic cells. Plays a role in antiviral immunity and limits new world arenavirus infection by decreasing virus internalization. Receptor for THBS1. Interaction with THBS1 stimulates phosphorylation of SIRPA. In response to THBS1, involved in ROS signaling in non-phagocytic cells, stimulating NADPH oxidase-derived ROS production. The polypeptide is Tyrosine-protein phosphatase non-receptor type substrate 1 (SIRPA) (Homo sapiens (Human)).